A 171-amino-acid chain; its full sequence is Large ribosomal subunit protein uL10 (171 aa).

It belongs to the universal ribosomal protein uL10 family. Part of the ribosomal stalk of the 50S ribosomal subunit. The N-terminus interacts with L11 and the large rRNA to form the base of the stalk. The C-terminus forms an elongated spine to which L12 dimers bind in a sequential fashion forming a multimeric L10(L12)X complex.

Functionally, forms part of the ribosomal stalk, playing a central role in the interaction of the ribosome with GTP-bound translation factors. This Nitrosomonas europaea (strain ATCC 19718 / CIP 103999 / KCTC 2705 / NBRC 14298) protein is Large ribosomal subunit protein uL10.